Consider the following 159-residue polypeptide: Aspartate carbamoyltransferase regulatory chain (159 aa).

Positions 108, 113, 138, and 141 each coordinate Zn(2+).

This sequence belongs to the PyrI family. As to quaternary structure, contains catalytic and regulatory chains. Zn(2+) is required as a cofactor.

Involved in allosteric regulation of aspartate carbamoyltransferase. The protein is Aspartate carbamoyltransferase regulatory chain of Thermofilum pendens (strain DSM 2475 / Hrk 5).